The primary structure comprises 584 residues: MNDLLKNKLKLIPHKPGCYLWKDQFNQIIYIGKAKDLYNRTHSYFNGCKDNKTSKLVNNINDLEYIVVNNVNEALILENNLIKTHLPKYNILLKDGSNYPYIMITNEQYPRLKYVRTYDKNKGIYFGPLADSTNKYQLFNLLNSIFPFNKCNHQPYKKCIYYDLHQCINQVQQSTYQEAISEVKEIFKGNLDHILMILQTKEQHAVTKLDFENAQKYAEQQKALTSIINSGLVQLDNNESFDIIGFYEKNNYLVIIIFNYVKGKLLNKSADTFAIYDYEINELITSFLMQYYSQNKISSKIIVSLDDDNLLALSQRFHTKFINAQTKFHKRILKLALDNAILYFESNIKNVINKQNELDDALNQLKQILKLPDLNIIECFDNSNINLSLPIAGMIVYQNGKLNNKLNRKYNLMTTKNASDYHFMIEVITRRYQRLVSQHQKLPNLIVVDGGKLQVNAALYALAQLQINIPLIGLKKDQKHKTDAIVLTNGDEIVLDRKSILYKFLANMQNDVHNYAISFLRDKHTKSIFNSLLDNVQGLGKKRFNELLKYYDSINDLKSASDQELLQFLPKNVLVNLREKLNKI.

Residues 14–91 (HKPGCYLWKD…IKTHLPKYNI (78 aa)) enclose the GIY-YIG domain. Residues 192–227 (DHILMILQTKEQHAVTKLDFENAQKYAEQQKALTSI) enclose the UVR domain.

It belongs to the UvrC family. Interacts with UvrB in an incision complex.

The protein localises to the cytoplasm. The UvrABC repair system catalyzes the recognition and processing of DNA lesions. UvrC both incises the 5' and 3' sides of the lesion. The N-terminal half is responsible for the 3' incision and the C-terminal half is responsible for the 5' incision. This Ureaplasma parvum serovar 3 (strain ATCC 27815 / 27 / NCTC 11736) protein is UvrABC system protein C.